A 261-amino-acid chain; its full sequence is Proteasome subunit beta type-2 (261 aa).

The propeptide at 1–29 is removed in mature form; the sequence is MAGLSFDNYQRNNFLAENSHTQPKATSTG. Thr30 functions as the Nucleophile in the catalytic mechanism.

This sequence belongs to the peptidase T1B family. The 26S proteasome consists of a 20S proteasome core and two 19S regulatory subunits. The 20S proteasome core is composed of 28 subunits that are arranged in four stacked rings, resulting in a barrel-shaped structure. The two end rings are each formed by seven alpha subunits, and the two central rings are each formed by seven beta subunits. The catalytic chamber with the active sites is on the inside of the barrel.

Its subcellular location is the cytoplasm. It is found in the nucleus. It carries out the reaction Cleavage of peptide bonds with very broad specificity.. In terms of biological role, the proteasome degrades poly-ubiquitinated proteins in the cytoplasm and in the nucleus. It is essential for the regulated turnover of proteins and for the removal of misfolded proteins. The proteasome is a multicatalytic proteinase complex that is characterized by its ability to cleave peptides with Arg, Phe, Tyr, Leu, and Glu adjacent to the leaving group at neutral or slightly basic pH. It has an ATP-dependent proteolytic activity. This is Proteasome subunit beta type-2 (PUP1) from Saccharomyces cerevisiae (strain ATCC 204508 / S288c) (Baker's yeast).